The sequence spans 123 residues: Small ribosomal subunit protein uS12 (123 aa).

3-methylthioaspartic acid is present on Asp89.

Belongs to the universal ribosomal protein uS12 family. As to quaternary structure, part of the 30S ribosomal subunit. Contacts proteins S8 and S17. May interact with IF1 in the 30S initiation complex.

With S4 and S5 plays an important role in translational accuracy. Its function is as follows. Interacts with and stabilizes bases of the 16S rRNA that are involved in tRNA selection in the A site and with the mRNA backbone. Located at the interface of the 30S and 50S subunits, it traverses the body of the 30S subunit contacting proteins on the other side and probably holding the rRNA structure together. The combined cluster of proteins S8, S12 and S17 appears to hold together the shoulder and platform of the 30S subunit. The protein is Small ribosomal subunit protein uS12 of Caulobacter sp. (strain K31).